A 256-amino-acid polypeptide reads, in one-letter code: MSAALFSLDGPARGAPWTAEPAAFYEPGRAGKPGRGAEPAASAMYDDESAIDFSAYIDSMAAVPTLELCHDELFADLFNSNHKAGALELLPGGPARLGGPGPAPRPLKREPDWGDGDAPGSLLPAQVAACAQTVVSLAAAAQPTPPASPEPPRRSPAPPAPGPARDKAAGKRGPDRGSPEYRQRRERNNIAVRKSRDKAKRRNQEMQQKLVELSAENEKLQQRVEQLTRDLAGLRRFFKQLPGAPFLPGAGAADAR.

Ser-2 is modified (N-acetylserine). Disordered regions lie at residues 18-40, 92-121, and 139-206; these read TAEP…AEPA, GGPA…APGS, and AAAQ…NQEM. Lys-108 is covalently cross-linked (Glycyl lysine isopeptide (Lys-Gly) (interchain with G-Cter in SUMO)). The span at 143-162 shows a compositional bias: pro residues; that stretch reads PTPPASPEPPRRSPAPPAPG. Basic and acidic residues predominate over residues 164-188; that stretch reads ARDKAAGKRGPDRGSPEYRQRRERN. The bZIP domain maps to 178 to 241; that stretch reads SPEYRQRRER…AGLRRFFKQL (64 aa). The interval 182–209 is basic motif; the sequence is RQRRERNNIAVRKSRDKAKRRNQEMQQK. Positions 213–241 are leucine-zipper; it reads LSAENEKLQQRVEQLTRDLAGLRRFFKQL.

Belongs to the bZIP family. C/EBP subfamily. In terms of assembly, binds DNA as a homodimer and as a heterodimer. Can form stable heterodimers with CEBPB. Can form stable heterodimers with CEBPA and CEBPE. Directly interacts with SPI1/PU.1; this interaction does not affect DNA-binding properties of each partner. Interacts with PRDM16.

It is found in the nucleus. Its function is as follows. Transcription activator that recognizes two different DNA motifs: the CCAAT homology common to many promoters and the enhanced core homology common to many enhancers. Important transcription factor regulating the expression of genes involved in immune and inflammatory responses. Transcriptional activator that enhances IL6 transcription alone and as heterodimer with CEBPB. This chain is CCAAT/enhancer-binding protein delta (CEBPD), found in Bos taurus (Bovine).